The primary structure comprises 201 residues: ATP synthase subunit b 2 (201 aa).

Residues 1–17 (MAEQKNPLTTPSPNADT) show a composition bias toward polar residues. Residues 1–39 (MAEQKNPLTTPSPNADTTIVPAGSPHTHTEQPSGGHGGA) are disordered. A helical membrane pass occupies residues 47–66 (TFLSQLIWLALAFGLLYYLM).

Belongs to the ATPase B chain family. F-type ATPases have 2 components, F(1) - the catalytic core - and F(0) - the membrane proton channel. F(1) has five subunits: alpha(3), beta(3), gamma(1), delta(1), epsilon(1). F(0) has three main subunits: a(1), b(2) and c(10-14). The alpha and beta chains form an alternating ring which encloses part of the gamma chain. F(1) is attached to F(0) by a central stalk formed by the gamma and epsilon chains, while a peripheral stalk is formed by the delta and b chains.

The protein localises to the cell inner membrane. F(1)F(0) ATP synthase produces ATP from ADP in the presence of a proton or sodium gradient. F-type ATPases consist of two structural domains, F(1) containing the extramembraneous catalytic core and F(0) containing the membrane proton channel, linked together by a central stalk and a peripheral stalk. During catalysis, ATP synthesis in the catalytic domain of F(1) is coupled via a rotary mechanism of the central stalk subunits to proton translocation. Functionally, component of the F(0) channel, it forms part of the peripheral stalk, linking F(1) to F(0). The b'-subunit is a diverged and duplicated form of b found in plants and photosynthetic bacteria. The protein is ATP synthase subunit b 2 (atpF2) of Methylorubrum extorquens (strain PA1) (Methylobacterium extorquens).